A 430-amino-acid chain; its full sequence is Tol-Pal system protein TolB (430 aa).

The first 21 residues, 1-21 (MKQALRVAFGFLMLWAAVLHA), serve as a signal peptide directing secretion.

It belongs to the TolB family. The Tol-Pal system is composed of five core proteins: the inner membrane proteins TolA, TolQ and TolR, the periplasmic protein TolB and the outer membrane protein Pal. They form a network linking the inner and outer membranes and the peptidoglycan layer.

Its subcellular location is the periplasm. Part of the Tol-Pal system, which plays a role in outer membrane invagination during cell division and is important for maintaining outer membrane integrity. TolB occupies a key intermediary position in the Tol-Pal system because it communicates directly with both membrane-embedded components, Pal in the outer membrane and TolA in the inner membrane. The sequence is that of Tol-Pal system protein TolB from Salmonella choleraesuis (strain SC-B67).